The following is a 784-amino-acid chain: ATP-dependent 6-phosphofructokinase, platelet type (784 aa).

The residue at position 1 (Met1) is an N-acetylmethionine. The segment at Met1–Ile398 is N-terminal catalytic PFK domain 1. Phosphoserine is present on residues Ser2, Ser6, and Ser20. ATP is bound by residues Gly33, Arg96–Cys97, and Gly126–Ser129. Asp127 serves as a coordination point for Mg(2+). Phosphoserine is present on Ser141. Residues Ser172–Asp174, Arg209, Met216–Arg218, Glu272, Arg300, and His306–Arg309 each bind substrate. Residue Asp174 is the Proton acceptor of the active site. Lys394 is subject to N6-acetyllysine. Residues Lys399–Cys410 form an interdomain linker region. The segment at Asn411 to Leu784 is C-terminal regulatory PFK domain 2. Arg480 serves as a coordination point for beta-D-fructose 2,6-bisphosphate. An N6-acetyllysine modification is found at Lys485. Residues Thr537 to Asn541, Arg575, Met582 to Gly584, and Glu638 contribute to the beta-D-fructose 2,6-bisphosphate site. Ser539 carries O-linked (GlcNAc) serine glycosylation. Tyr650 is subject to Phosphotyrosine. Residues Arg664 and His670 to Gln673 each bind beta-D-fructose 2,6-bisphosphate. Lys687 carries the N6-acetyllysine modification. Residue Arg743 participates in beta-D-fructose 2,6-bisphosphate binding.

It belongs to the phosphofructokinase type A (PFKA) family. ATP-dependent PFK group I subfamily. Eukaryotic two domain clade 'E' sub-subfamily. As to quaternary structure, homo- and heterotetramers. Phosphofructokinase (PFK) enzyme functions as a tetramer composed of different combinations of 3 types of subunits, called PFKM (M), PFKL (L) and PFKP (P). The composition of the PFK tetramer differs according to the tissue type it is present in. The kinetic and regulatory properties of the tetrameric enzyme are dependent on the subunit composition, hence can vary across tissues. Interacts with ATG4B; promoting phosphorylation of ATG4B. The cofactor is Mg(2+). Post-translationally, glcNAcylation decreases enzyme activity. In terms of tissue distribution, expression is constant during tumor growth and markedly decreases when cell proliferation stops.

The protein localises to the cytoplasm. The catalysed reaction is beta-D-fructose 6-phosphate + ATP = beta-D-fructose 1,6-bisphosphate + ADP + H(+). Its pathway is carbohydrate degradation; glycolysis; D-glyceraldehyde 3-phosphate and glycerone phosphate from D-glucose: step 3/4. Its activity is regulated as follows. Allosterically activated by ADP, AMP, or fructose 2,6-bisphosphate, and allosterically inhibited by ATP or citrate. Its function is as follows. Catalyzes the phosphorylation of D-fructose 6-phosphate to fructose 1,6-bisphosphate by ATP, the first committing step of glycolysis. The protein is ATP-dependent 6-phosphofructokinase, platelet type (Pfkp) of Mus musculus (Mouse).